The following is a 443-amino-acid chain: Glutamate-1-semialdehyde 2,1-aminomutase (443 aa).

An N6-(pyridoxal phosphate)lysine modification is found at K281.

Belongs to the class-III pyridoxal-phosphate-dependent aminotransferase family. HemL subfamily. As to quaternary structure, homodimer. Pyridoxal 5'-phosphate serves as cofactor.

The protein localises to the cytoplasm. It carries out the reaction (S)-4-amino-5-oxopentanoate = 5-aminolevulinate. It functions in the pathway porphyrin-containing compound metabolism; protoporphyrin-IX biosynthesis; 5-aminolevulinate from L-glutamyl-tRNA(Glu): step 2/2. This chain is Glutamate-1-semialdehyde 2,1-aminomutase, found in Leptospira interrogans serogroup Icterohaemorrhagiae serovar Lai (strain 56601).